We begin with the raw amino-acid sequence, 199 residues long: NAD(P)H dehydrogenase (quinone) (199 aa).

One can recognise a Flavodoxin-like domain in the interval 4–190 (MLVLYYSAYG…DGARFQGRRV (187 aa)). Residues 10 to 15 (SAYGYM) and 78 to 80 (TRY) contribute to the FMN site. Tyr12 contributes to the NAD(+) binding site. Residue Trp98 coordinates substrate. Residues 113-119 (STATQHG) and His134 contribute to the FMN site. The disordered stretch occupies residues 158 to 181 (GAPYGMTTTADGDGSRQPSAQELD). Over residues 163–177 (MTTTADGDGSRQPSA) the composition is skewed to polar residues.

Belongs to the WrbA family. FMN is required as a cofactor.

It carries out the reaction a quinone + NADH + H(+) = a quinol + NAD(+). It catalyses the reaction a quinone + NADPH + H(+) = a quinol + NADP(+). The polypeptide is NAD(P)H dehydrogenase (quinone) (Brucella abortus (strain S19)).